The chain runs to 128 residues: MQRHMLKSKIHRAAVTHCELHYEGSCAIDEDLLEAANLVENERIDIWNINNGERFSTYAIKGERGSGMISLNGSAARRAQLGDLVIIAAFAMVDEAELQAGWKPKLVFIDEGNKIKGHRDHVPTQNWT.

The Schiff-base intermediate with substrate; via pyruvic acid role is filled by Ser-25. Residue Ser-25 is modified to Pyruvic acid (Ser). Residue Thr-57 coordinates substrate. Tyr-58 serves as the catalytic Proton donor. 73–75 contributes to the substrate binding site; the sequence is GSA.

The protein belongs to the PanD family. In terms of assembly, heterooctamer of four alpha and four beta subunits. Pyruvate serves as cofactor. In terms of processing, is synthesized initially as an inactive proenzyme, which is activated by self-cleavage at a specific serine bond to produce a beta-subunit with a hydroxyl group at its C-terminus and an alpha-subunit with a pyruvoyl group at its N-terminus.

It is found in the cytoplasm. The enzyme catalyses L-aspartate + H(+) = beta-alanine + CO2. Its pathway is cofactor biosynthesis; (R)-pantothenate biosynthesis; beta-alanine from L-aspartate: step 1/1. Its function is as follows. Catalyzes the pyruvoyl-dependent decarboxylation of aspartate to produce beta-alanine. This Burkholderia ambifaria (strain ATCC BAA-244 / DSM 16087 / CCUG 44356 / LMG 19182 / AMMD) (Burkholderia cepacia (strain AMMD)) protein is Aspartate 1-decarboxylase.